Consider the following 651-residue polypeptide: Peptide-N(4)-(N-acetyl-beta-glucosaminyl)asparagine amidase (651 aa).

N-acetylalanine is present on A2. The 62-residue stretch at E30–K91 folds into the PUB domain. The interval S116 to P153 is disordered. Residues M143–Q152 are compositionally biased toward polar residues. 4 residues coordinate Zn(2+): C247, C250, C280, and C283. C306 serves as the catalytic Nucleophile. Residues H333 and D350 contribute to the active site. Residues E451–L651 form the PAW domain.

It belongs to the transglutaminase-like superfamily. PNGase family. In terms of assembly, component of a complex required to couple retrotranslocation, ubiquitination and deglycosylation composed of NGLY1, SAKS1, AMFR, VCP and RAD23B. Interacts with the proteasome components RAD23B and PSMC1. Interacts with directly with VCP. Interacts with DERL1, bringing it close to the endoplasmic reticulum membrane. Interacts with SAKS1. Zn(2+) serves as cofactor.

The protein localises to the cytoplasm. The catalysed reaction is Hydrolysis of an N(4)-(acetyl-beta-D-glucosaminyl)asparagine residue in which the glucosamine residue may be further glycosylated, to yield a (substituted) N-acetyl-beta-D-glucosaminylamine and a peptide containing an aspartate residue.. Inhibited by Z-VAD-fmk, a well-known caspase inhibitor, which inhibits enzyme activity through covalent binding of the carbohydrate to the single Cys-306 residue. Functionally, specifically deglycosylates the denatured form of N-linked glycoproteins in the cytoplasm and assists their proteasome-mediated degradation. Cleaves the beta-aspartyl-glucosamine (GlcNAc) of the glycan and the amide side chain of Asn, converting Asn to Asp. Prefers proteins containing high-mannose over those bearing complex type oligosaccharides. Can recognize misfolded proteins in the endoplasmic reticulum that are exported to the cytosol to be destroyed and deglycosylate them, while it has no activity toward native proteins. Deglycosylation is a prerequisite for subsequent proteasome-mediated degradation of some, but not all, misfolded glycoproteins. The polypeptide is Peptide-N(4)-(N-acetyl-beta-glucosaminyl)asparagine amidase (Ngly1) (Rattus norvegicus (Rat)).